Reading from the N-terminus, the 559-residue chain is Glycerol kinase (559 aa).

ADP is bound at residue T20. The ATP site is built by T20, S21, and S22. Sn-glycerol 3-phosphate is bound at residue T20. R24 contacts ADP. Sn-glycerol 3-phosphate-binding residues include R94, E95, and Y148. Glycerol contacts are provided by R94, E95, and Y148. Beta-D-fructose 1,6-bisphosphate is bound at residue G252. D265 is a sn-glycerol 3-phosphate binding site. 2 residues coordinate glycerol: D265 and Q266. ADP-binding residues include T287, G332, G433, and N437. Residues T287, G332, and G433 each contribute to the ATP site. The chain crosses the membrane as a helical span at residues 532–552 (IFCSLPLGFFIVSSMVMLIGA).

This sequence belongs to the FGGY kinase family. Widely expressed in fetal and adult tissues. As to expression, the sole isoform expressed in adult liver and kidney.

It is found in the mitochondrion outer membrane. Its subcellular location is the nucleus. The protein resides in the cytoplasm. It localises to the cytosol. It carries out the reaction glycerol + ATP = sn-glycerol 3-phosphate + ADP + H(+). It participates in polyol metabolism; glycerol degradation via glycerol kinase pathway; sn-glycerol 3-phosphate from glycerol: step 1/1. Its activity is regulated as follows. Potassium and magnesium-dependent. Its function is as follows. Kinase that plays a key role in glycerol metabolism, catalyzing its phosphorylation to produce sn-glycerol 3-phosphate. Sn-glycerol 3-phosphate is a crucial intermediate in various metabolic pathways, such as the synthesis of glycerolipids and triglycerides, glycogenesis, glycolysis and gluconeogenesis. This chain is Glycerol kinase, found in Homo sapiens (Human).